A 1058-amino-acid polypeptide reads, in one-letter code: SMC5-SMC6 complex localization factor protein 1 (1058 aa).

BRCT domains lie at 12-77 (MTGF…IHSA) and 119-196 (GAPG…GDFL). Residues 410-1058 (PRGVLNLIES…MMCRSVMEFS (649 aa)) are NSE5-like domain; mediates interaction with SLF2. 3 ANK repeats span residues 806-836 (KGET…DINV), 840-869 (AGWT…EVDL), and 874-903 (DGVT…PVLL). Residue Lys-931 forms a Glycyl lysine isopeptide (Lys-Gly) (interchain with G-Cter in SUMO2) linkage.

In terms of assembly, interacts (via N-terminus) with SLF2; this interaction links RAD18 to the SMC5-SMC6 complex. Interacts (via BRCT domains) with RAD18; this interaction occurs in a SLF2-independent manner. Interacts with SMC6. Interacts (via BRCT domains) with RAD18 (via C-terminus and phosphorylated form); this interaction is required for efficient repair of UV-induced DNA damage.

The protein resides in the nucleus. It localises to the cytoplasm. Its subcellular location is the cytoskeleton. The protein localises to the microtubule organizing center. It is found in the centrosome. Its function is as follows. Plays a role in the DNA damage response (DDR) pathway by regulating postreplication repair of UV-damaged DNA and genomic stability maintenance. The SLF1-SLF2 complex acts to link RAD18 with the SMC5-SMC6 complex at replication-coupled interstrand cross-links (ICL) and DNA double-strand breaks (DSBs) sites on chromatin during DNA repair in response to stalled replication forks. Promotes the recruitment of SLF2 and the SMC5-SMC6 complex to DNA lesions. The sequence is that of SMC5-SMC6 complex localization factor protein 1 from Homo sapiens (Human).